Here is a 37-residue protein sequence, read N- to C-terminus: Cytochrome b6-f complex subunit 5 (37 aa).

Residues 5–25 (LLSGIVLGLVPVTITGLFVAA) traverse the membrane as a helical segment.

This sequence belongs to the PetG family. The 4 large subunits of the cytochrome b6-f complex are cytochrome b6, subunit IV (17 kDa polypeptide, PetD), cytochrome f and the Rieske protein, while the 4 small subunits are PetG, PetL, PetM and PetN. The complex functions as a dimer.

It is found in the plastid. It localises to the chloroplast thylakoid membrane. Functionally, component of the cytochrome b6-f complex, which mediates electron transfer between photosystem II (PSII) and photosystem I (PSI), cyclic electron flow around PSI, and state transitions. PetG is required for either the stability or assembly of the cytochrome b6-f complex. The protein is Cytochrome b6-f complex subunit 5 of Emiliania huxleyi (Coccolithophore).